Here is a 54-residue protein sequence, read N- to C-terminus: MKELIFFLLIIVILFVVFMVVSSKQTKTFGRNEEPFLQIKNNLGWGGCGLTNWF.

The signal sequence occupies residues 1–23; it reads MKELIFFLLIIVILFVVFMVVSS.

This is an uncharacterized protein from Acheta domesticus (House cricket).